Consider the following 182-residue polypeptide: NADH-quinone oxidoreductase subunit B 1 (182 aa).

Residues Cys-47, Cys-48, Cys-113, and Cys-142 each coordinate [4Fe-4S] cluster.

The protein belongs to the complex I 20 kDa subunit family. NDH-1 is composed of 14 different subunits. Subunits NuoB, C, D, E, F, and G constitute the peripheral sector of the complex. The cofactor is [4Fe-4S] cluster.

The protein resides in the cell inner membrane. It catalyses the reaction a quinone + NADH + 5 H(+)(in) = a quinol + NAD(+) + 4 H(+)(out). NDH-1 shuttles electrons from NADH, via FMN and iron-sulfur (Fe-S) centers, to quinones in the respiratory chain. Couples the redox reaction to proton translocation (for every two electrons transferred, four hydrogen ions are translocated across the cytoplasmic membrane), and thus conserves the redox energy in a proton gradient. This Anaeromyxobacter dehalogenans (strain 2CP-C) protein is NADH-quinone oxidoreductase subunit B 1.